The sequence spans 101 residues: uncharacterized protein (101 aa).

This is an uncharacterized protein from Haemophilus influenzae (strain ATCC 51907 / DSM 11121 / KW20 / Rd).